We begin with the raw amino-acid sequence, 345 residues long: Protein RecA (345 aa).

65 to 72 lines the ATP pocket; the sequence is GPESSGKT.

The protein belongs to the RecA family.

It is found in the cytoplasm. Can catalyze the hydrolysis of ATP in the presence of single-stranded DNA, the ATP-dependent uptake of single-stranded DNA by duplex DNA, and the ATP-dependent hybridization of homologous single-stranded DNAs. It interacts with LexA causing its activation and leading to its autocatalytic cleavage. In Sulfurimonas denitrificans (strain ATCC 33889 / DSM 1251) (Thiomicrospira denitrificans (strain ATCC 33889 / DSM 1251)), this protein is Protein RecA.